The chain runs to 170 residues: Adenine phosphoribosyltransferase (170 aa).

It belongs to the purine/pyrimidine phosphoribosyltransferase family. In terms of assembly, homodimer.

The protein resides in the cytoplasm. It catalyses the reaction AMP + diphosphate = 5-phospho-alpha-D-ribose 1-diphosphate + adenine. It functions in the pathway purine metabolism; AMP biosynthesis via salvage pathway; AMP from adenine: step 1/1. Catalyzes a salvage reaction resulting in the formation of AMP, that is energically less costly than de novo synthesis. This Bacillus mycoides (strain KBAB4) (Bacillus weihenstephanensis) protein is Adenine phosphoribosyltransferase.